The primary structure comprises 214 residues: Adenylate kinase (214 aa).

ATP is bound at residue 10-15; that stretch reads GAGKGT. Residues 30–59 are NMP; sequence STGDMLRAAVKAGTPLGLEAKKVMDAGQLV. AMP is bound by residues Thr-31, Arg-36, 57-59, 85-88, and Gln-92; these read QLV and GFPR. The tract at residues 122 to 159 is LID; sequence GRRVHPGSGRVYHVVFNPPKVEGKDDVTGEDLAIRPDD. ATP contacts are provided by residues Arg-123 and 132-133; that span reads VY. Residues Arg-156 and Arg-167 each contribute to the AMP site. An ATP-binding site is contributed by Gln-200.

Belongs to the adenylate kinase family. Monomer.

It is found in the cytoplasm. It catalyses the reaction AMP + ATP = 2 ADP. The protein operates within purine metabolism; AMP biosynthesis via salvage pathway; AMP from ADP: step 1/1. Functionally, catalyzes the reversible transfer of the terminal phosphate group between ATP and AMP. Plays an important role in cellular energy homeostasis and in adenine nucleotide metabolism. The protein is Adenylate kinase of Shewanella oneidensis (strain ATCC 700550 / JCM 31522 / CIP 106686 / LMG 19005 / NCIMB 14063 / MR-1).